A 421-amino-acid chain; its full sequence is Testin (421 aa).

The 108-residue stretch at 92 to 199 (MILTNPVAAK…GDVKLPRDMN (108 aa)) folds into the PET domain. Disordered regions lie at residues 133–164 (EKQPVAGSEGAQYRKKQLAKQLPAHDQDPSKC) and 193–213 (KLPRDMNTQGPNRMYIPGGDR). Over residues 155–164 (PAHDQDPSKC) the composition is skewed to basic and acidic residues. LIM zinc-binding domains follow at residues 234 to 297 (YSCY…CDSE), 299 to 359 (PRCA…NHAV), and 362 to 421 (QGCH…KMMS).

Belongs to the prickle / espinas / testin family. In terms of assembly, interacts via LIM domain 1 with ZYX. Interacts (via LIM domain 3) with ENAH and VASP. Interacts with ALKBH4, talin, actin, alpha-actinin, GRIP1 and PXN. Interacts (via LIM domain 2) with ACTL7A (via N-terminus). Heterodimer with ACTL7A; the heterodimer interacts with ENAH to form a heterotrimer.

It localises to the cytoplasm. The protein localises to the cell junction. Its subcellular location is the focal adhesion. Its function is as follows. Scaffold protein that may play a role in cell adhesion, cell spreading and in the reorganization of the actin cytoskeleton. Plays a role in the regulation of cell proliferation. May act as a tumor suppressor. This is Testin (TES) from Muntiacus muntjak (Barking deer).